The sequence spans 437 residues: Glutamate-1-semialdehyde 2,1-aminomutase 1 (437 aa).

An N6-(pyridoxal phosphate)lysine modification is found at lysine 268.

It belongs to the class-III pyridoxal-phosphate-dependent aminotransferase family. HemL subfamily. Homodimer. Pyridoxal 5'-phosphate is required as a cofactor.

It localises to the cytoplasm. The enzyme catalyses (S)-4-amino-5-oxopentanoate = 5-aminolevulinate. Its pathway is porphyrin-containing compound metabolism; protoporphyrin-IX biosynthesis; 5-aminolevulinate from L-glutamyl-tRNA(Glu): step 2/2. The protein is Glutamate-1-semialdehyde 2,1-aminomutase 1 of Halalkalibacterium halodurans (strain ATCC BAA-125 / DSM 18197 / FERM 7344 / JCM 9153 / C-125) (Bacillus halodurans).